Consider the following 273-residue polypeptide: MQDLQKIIDDAFENRASLSPAAAPAAVRDAVAEVIAGLDAGTLRVAEKKDGQWVVNQWIKKAVLISFRLRDNEVIPAGGLNFFDKVPTKFGDYTPEQFQQGGFRVVPPAVARKGSYIAKNVVLMPSYVNIGAYVDEGTMVDTWATVGSCAQIGKNVHLSGGVGIGGVLEPVQAGPVIIEDNVFVGARSEVVEGVIIEENAVLSMGVYIGQSTKIYDRETGSITYGRVPAGAVVVPGSLPSADGKYSLYCAVIVKKVDAQTRAKTGINELLRGA.

Residues Arg104 and Asp141 each contribute to the substrate site.

This sequence belongs to the transferase hexapeptide repeat family. In terms of assembly, homotrimer.

The protein localises to the cytoplasm. It carries out the reaction (S)-2,3,4,5-tetrahydrodipicolinate + succinyl-CoA + H2O = (S)-2-succinylamino-6-oxoheptanedioate + CoA. It participates in amino-acid biosynthesis; L-lysine biosynthesis via DAP pathway; LL-2,6-diaminopimelate from (S)-tetrahydrodipicolinate (succinylase route): step 1/3. The protein is 2,3,4,5-tetrahydropyridine-2,6-dicarboxylate N-succinyltransferase of Azoarcus sp. (strain BH72).